Reading from the N-terminus, the 396-residue chain is Alpha-1-antitrypsin (396 aa).

The first 2 residues, 1–2, serve as a signal peptide directing secretion; it reads HV. The interval 1–24 is disordered; that stretch reads HVEDPQGDAAQKTDTSHHDQEHST. Over residues 14–24 the composition is skewed to basic and acidic residues; sequence DTSHHDQEHST. Ser-16 is modified (phosphoserine). Residues Asn-48, Asn-85, Asn-123, and Asn-249 are each glycosylated (N-linked (GlcNAc...) asparagine). The RCL stretch occupies residues 351-370; sequence GAMFLEAIPMSIPPEVKFNK. Ser-361 is subject to Phosphoserine.

Belongs to the serpin family. Interacts with CELA2A. Interacts with ERGIC3 and LMAN1/ERGIC53. Interacts with PRSS1/Trypsin. Plasma.

It is found in the secreted. Functionally, inhibitor of serine proteases. Its primary target is elastase, but it also has a moderate affinity for plasmin and thrombin. Inhibits trypsin, chymotrypsin and plasminogen activator. In Chlorocebus aethiops (Green monkey), this protein is Alpha-1-antitrypsin (SERPINA1).